We begin with the raw amino-acid sequence, 363 residues long: Cytochrome c oxidase subunit 2 (363 aa).

The disordered stretch occupies residues 1–23; sequence MTPRGPGRLQRLSQCRPQRGSGG. Residues 1–41 form the signal peptide; that stretch reads MTPRGPGRLQRLSQCRPQRGSGGPARGLRQLALAAMLGALA. Helical transmembrane passes span 71–91 and 118–138; these read LWIG…GLIF and LVLT…TVVV. The Cu cation site is built by H254, C295, C299, and H303.

Belongs to the cytochrome c oxidase subunit 2 family. Cu cation is required as a cofactor. It depends on heme as a cofactor.

It is found in the cell membrane. It carries out the reaction 4 Fe(II)-[cytochrome c] + O2 + 8 H(+)(in) = 4 Fe(III)-[cytochrome c] + 2 H2O + 4 H(+)(out). In terms of biological role, subunits I and II form the functional core of the enzyme complex. Electrons originating in cytochrome c are transferred via heme a and Cu(A) to the binuclear center formed by heme a3 and Cu(B). The protein is Cytochrome c oxidase subunit 2 (ctaC) of Mycobacterium bovis (strain ATCC BAA-935 / AF2122/97).